Here is a 600-residue protein sequence, read N- to C-terminus: MESCKIICISQTGYDKDISSIKENFAGCDFIKSIDMDQVTSNNILRFFKHYDNDIFTLNTVKTIMNHYNAWEKIANSNDNIDIYFIIDEAVTTPKTISLTRQLLLKKTNDQQIIFVGGNSDLQCQDLNIRPFDHKNSNFLSAYLITKLAVKILLEYIYYNGIKTTINKIINDCFGNCFESIPYLFMVNSQNEKNVFDNKRITFPMIDNNFEFNDYIFYPNLDSAGNDICEVYADIPTLREIANKDDNCIGFNTYGWIKFFVTKEERFTMLKNKYYRCDGLYVKKRHDQLIKKRNTIMTQDKIKIVREKLSNSFVKIFVNNDAKKYSWHLVEAVLKIFPNYKLVGPTDNYDISINHLVEQFIFRPDSFNILITGEPTMNITYFDMCIDTKYTSQSSITVYYPFIFSSMREHRKSLNHTDYIKPKTKFCAYMYNMRYPHRIWYFNLVSKYRQVDALGKCCNNVDIKDSRSHFTEESTYNDIAIELYSEYKFVLALENIFWPGYSTEKLINPMIANSIPIYWGDSTIFKHINKKRTIYIPDFPNETDLLEHIKNIDTNDELYKSIINEPIYINPDFSLDKLEENLSINIGKVFSDQEIQTLYI.

The protein belongs to the glycosyltransferase 10 family.

This chain is Putative fucosyltransferase R654, found in Acanthamoeba polyphaga mimivirus (APMV).